The primary structure comprises 132 residues: Large ribosomal subunit protein uL22 (132 aa).

It belongs to the universal ribosomal protein uL22 family. As to quaternary structure, part of the 50S ribosomal subunit.

This protein binds specifically to 23S rRNA; its binding is stimulated by other ribosomal proteins, e.g. L4, L17, and L20. It is important during the early stages of 50S assembly. It makes multiple contacts with different domains of the 23S rRNA in the assembled 50S subunit and ribosome. In terms of biological role, the globular domain of the protein is located near the polypeptide exit tunnel on the outside of the subunit, while an extended beta-hairpin is found that lines the wall of the exit tunnel in the center of the 70S ribosome. The protein is Large ribosomal subunit protein uL22 of Rhodospirillum centenum (strain ATCC 51521 / SW).